A 180-amino-acid polypeptide reads, in one-letter code: Inosine/xanthosine triphosphatase (180 aa).

8–13 (TTNPAK) provides a ligand contact to substrate. Residues aspartate 38 and glutamate 68 each contribute to the Mg(2+) site. Position 68-69 (68-69 (EA)) interacts with substrate.

The protein belongs to the YjjX NTPase family. Homodimer. Mg(2+) is required as a cofactor. It depends on Mn(2+) as a cofactor.

It carries out the reaction XTP + H2O = XDP + phosphate + H(+). The catalysed reaction is ITP + H2O = IDP + phosphate + H(+). Phosphatase that hydrolyzes non-canonical purine nucleotides such as XTP and ITP to their respective diphosphate derivatives. Probably excludes non-canonical purines from DNA/RNA precursor pool, thus preventing their incorporation into DNA/RNA and avoiding chromosomal lesions. This Yersinia pestis bv. Antiqua (strain Antiqua) protein is Inosine/xanthosine triphosphatase.